We begin with the raw amino-acid sequence, 533 residues long: Thromboxane-A synthase (533 aa).

At 1–10 (MEVLGLLKFE) the chain is on the cytoplasmic side. A helical membrane pass occupies residues 11–31 (VSGTVVTVTLSVVLLALLKWY). Residues 32-75 (STSAFSRLRKLGIRHPEPSPFVGNLMFFRQGFWESHLELRERYG) are Lumenal-facing. The chain crosses the membrane as a helical span at residues 76-96 (PLCGYYLGRRMYIVISDPDMI). Over 97-223 (KEVLVENFSN…QRVFAFSTPR (127 aa)) the chain is Cytoplasmic. Residues 224-244 (PLLALILSFPSIMVPLARILP) traverse the membrane as a helical segment. At 245-335 (NKNRDELNGF…LTVDEIAGQA (91 aa)) the chain is on the lumenal side. The helical transmembrane segment at 336–356 (FLFLIAGHEITTNTLSFITYL) threads the bilayer. The Cytoplasmic portion of the chain corresponds to 357-533 (LATHPECQER…NGVYVKIVSR (177 aa)). Cys479 lines the heme pocket.

This sequence belongs to the cytochrome P450 family. As to quaternary structure, monomer. Heme serves as cofactor. In terms of tissue distribution, expressed in bone marrow, spleen, lung, thymus, liver, uterus, and macrophages.

The protein localises to the endoplasmic reticulum membrane. The enzyme catalyses prostaglandin H2 = thromboxane A2. It catalyses the reaction prostaglandin H2 = (12S)-hydroxy-(5Z,8E,10E)-heptadecatrienoate + malonaldehyde. The catalysed reaction is a hydroperoxyeicosatetraenoate = an oxoeicosatetraenoate + H2O. It carries out the reaction (15S)-hydroperoxy-(5Z,8Z,11Z,13E)-eicosatetraenoate = 15-oxo-(5Z,8Z,11Z,13E)-eicosatetraenoate + H2O. The enzyme catalyses (15S)-hydroperoxy-(5Z,8Z,11Z,13E)-eicosatetraenoate + AH2 = (15S)-hydroxy-(5Z,8Z,11Z,13E)-eicosatetraenoate + A + H2O. In terms of biological role, catalyzes the conversion of prostaglandin H2 (PGH2) to thromboxane A2 (TXA2), a potent inducer of blood vessel constriction and platelet aggregation. Also cleaves PGH2 to 12-hydroxy-heptadecatrienoicacid (12-HHT) and malondialdehyde, which is known to act as a mediator of DNA damage. 12-HHT and malondialdehyde are formed stoichiometrically in the same amounts as TXA2. Additionally, displays dehydratase activity, toward (15S)-hydroperoxy-(5Z,8Z,11Z,13E)-eicosatetraenoate (15(S)-HPETE) producing 15-KETE and 15-HETE. The chain is Thromboxane-A synthase (Tbxas1) from Rattus norvegicus (Rat).